The primary structure comprises 757 residues: Cellulose synthase-like protein B5 (757 aa).

2 consecutive transmembrane segments (helical) span residues 24–44 and 50–70; these read AVDLTILGLLYSLLLYRILHI and VWLLAFFCESCFSLVWLIFTC. Catalysis depends on residues Asp-136 and Asp-460. Transmembrane regions (helical) follow at residues 531–551, 572–592, 613–633, 671–691, 704–724, and 735–755; these read LAYFWALMCLRSIPELIYCLL, IVTLVGMHCLYSLWQFMSLGF, LFSIQDIILKLLGISQIGFVI, LFIPGTFIMLVNLAALAGYLV, GSGLAEACGCILVVMLFLPFL, and IPLSTLSKAAFLTVLFVFFCV.

Belongs to the glycosyltransferase 2 family. Plant cellulose synthase-like B subfamily. As to expression, expressed in young seedlings, primarily in the vascular tissue. Expressed in the root cap.

It localises to the golgi apparatus membrane. Thought to be a Golgi-localized beta-glycan synthase that polymerize the backbones of noncellulosic polysaccharides (hemicelluloses) of plant cell wall. This chain is Cellulose synthase-like protein B5 (CSLB5), found in Arabidopsis thaliana (Mouse-ear cress).